The following is a 1229-amino-acid chain: Putative cell division cycle ATPase (1229 aa).

The span at 252 to 267 (GKKNNNGNVKKGIKNV) shows a compositional bias: low complexity. The disordered stretch occupies residues 252 to 315 (GKKNNNGNVK…GGKNNSYYNE (64 aa)). Positions 268–281 (PMDEKSYSPNDHDN) are enriched in basic and acidic residues. A compositionally biased stretch (low complexity) spans 282 to 314 (NSNNSNNNNNNDNNNSNNNNNNNNGGKNNSYYN). 568-575 (GIPGTGKT) contacts ATP. 2 disordered regions span residues 814–837 (TLLQ…DALD) and 860–892 (FSND…KNER). 2 stretches are compositionally biased toward basic and acidic residues: residues 819–837 (DKNE…DALD) and 882–892 (NPNDKLDKNER). 975–982 (GPPGCGKT) serves as a coordination point for ATP.

Belongs to the AAA ATPase family.

The polypeptide is Putative cell division cycle ATPase (Plasmodium falciparum (isolate 3D7)).